The sequence spans 220 residues: Deep-sea actinoporin Cjtox I (220 aa).

A signal peptide spans 1-19; sequence MNRLIILCLVAATIYSTIA. The propeptide occupies 20-42; it reads LPMKEDISNEERPTSVNEKPVKK. Phosphocholine is bound by residues serine 96, valine 128, serine 146, proline 148, tyrosine 174, tyrosine 178, and tyrosine 179. The trp-rich region, which is important for the binding to lipid membrane stretch occupies residues 146–161; that stretch reads SVPYDYNWYSNWWNIK. A Cell attachment site, crucial for protein stability motif is present at residues 185–187; that stretch reads KGN.

The protein belongs to the actinoporin family. Sea anemone subfamily. As to quaternary structure, octamer or nonamer in membranes. Monomer in the soluble state. Expressed in tentacles.

Its subcellular location is the secreted. The protein resides in the nematocyst. The protein localises to the target cell membrane. Probably acts in predation. Pore-forming protein that forms cations-selective hydrophilic pores of around 1 nm and causes cytolysis. Pore formation is a multi-step process that involves specific recognition of membrane sphingomyelin (but neither cholesterol nor phosphatidylcholine) using aromatic rich region and adjacent phosphocholine (POC) binding site, firm binding to the membrane (mainly driven by hydrophobic interactions) accompanied by the transfer of the N-terminal region to the lipid-water interface and finally pore formation after oligomerization of monomers. Shows hemolytic activity on equine erythrocytes. Hemolysis is moderately inhibited in presence of sphingomyelin, suggesting that this protein targets sphingomyelin. This is Deep-sea actinoporin Cjtox I from Cribrinopsis japonica (Deep-sea anemone).